Consider the following 163-residue polypeptide: Troponin C (163 aa).

S1 carries the N-acetylserine modification. EF-hand domains are found at residues 14-49 (EQISEFKMAFDMFDEDGGGDISTKELGTIMKRLGMS), 50-85 (ISREELQQMIDEVDEDASGTIDFEEFLEMMARAMQD), 90-125 (IPDDELRAAFRVLDKNGDGFIDKDEFRALASECAGD), and 127-162 (LTDDELLEFMMDYDGNRDGRFDYEEWKEIIQELKVR). K20 bears the N6,N6-dimethyllysine; alternate mark. Position 20 is an N6-methyllysine; alternate (K20). Ca(2+) is bound by residues D27, D29, D33, E38, D63, D65, S67, T69, E74, D103, N105, D107, and E114.

It belongs to the troponin C family.

Functionally, troponin is the central regulatory protein of striated muscle contraction. Tn consists of three components: Tn-I which is the inhibitor of actomyosin ATPase, Tn-T which contains the binding site for tropomyosin and Tn-C. The binding of calcium to Tn-C abolishes the inhibitory action of Tn on actin filaments. This is Troponin C from Branchiostoma lanceolatum (Common lancelet).